The chain runs to 325 residues: Tetraacyldisaccharide 4'-kinase (325 aa).

55-62 contributes to the ATP binding site; that stretch reads TAGGNGKT.

Belongs to the LpxK family.

It carries out the reaction a lipid A disaccharide + ATP = a lipid IVA + ADP + H(+). The protein operates within glycolipid biosynthesis; lipid IV(A) biosynthesis; lipid IV(A) from (3R)-3-hydroxytetradecanoyl-[acyl-carrier-protein] and UDP-N-acetyl-alpha-D-glucosamine: step 6/6. Functionally, transfers the gamma-phosphate of ATP to the 4'-position of a tetraacyldisaccharide 1-phosphate intermediate (termed DS-1-P) to form tetraacyldisaccharide 1,4'-bis-phosphate (lipid IVA). The protein is Tetraacyldisaccharide 4'-kinase of Cronobacter sakazakii (strain ATCC BAA-894) (Enterobacter sakazakii).